Consider the following 141-residue polypeptide: Nucleoside diphosphate kinase (141 aa).

Residues Lys11, Phe59, Arg87, Thr93, Arg104, and Asn114 each coordinate ATP. Residue His117 is the Pros-phosphohistidine intermediate of the active site.

Belongs to the NDK family. Homotetramer. The cofactor is Mg(2+).

Its subcellular location is the cytoplasm. It carries out the reaction a 2'-deoxyribonucleoside 5'-diphosphate + ATP = a 2'-deoxyribonucleoside 5'-triphosphate + ADP. The enzyme catalyses a ribonucleoside 5'-diphosphate + ATP = a ribonucleoside 5'-triphosphate + ADP. Functionally, major role in the synthesis of nucleoside triphosphates other than ATP. The ATP gamma phosphate is transferred to the NDP beta phosphate via a ping-pong mechanism, using a phosphorylated active-site intermediate. This is Nucleoside diphosphate kinase from Teredinibacter turnerae (strain ATCC 39867 / T7901).